A 91-amino-acid chain; its full sequence is MSDNNQATTNASVLTGRVVSDKMDKSITVLIERLVRHPLYGKQLRRSTKIKAHDENNVCQQGDLVRIKETRPISKTKSWTLVDVVEKVEKI.

Belongs to the universal ribosomal protein uS17 family. As to quaternary structure, part of the 30S ribosomal subunit.

One of the primary rRNA binding proteins, it binds specifically to the 5'-end of 16S ribosomal RNA. The chain is Small ribosomal subunit protein uS17 from Psychrobacter cryohalolentis (strain ATCC BAA-1226 / DSM 17306 / VKM B-2378 / K5).